The sequence spans 201 residues: Peptide deformylase 2 (201 aa).

2 residues coordinate Fe cation: Cys-121 and His-163. The active site involves Glu-164. Fe cation is bound at residue His-167.

This sequence belongs to the polypeptide deformylase family. Requires Fe(2+) as cofactor.

It catalyses the reaction N-terminal N-formyl-L-methionyl-[peptide] + H2O = N-terminal L-methionyl-[peptide] + formate. Functionally, removes the formyl group from the N-terminal Met of newly synthesized proteins. Requires at least a dipeptide for an efficient rate of reaction. N-terminal L-methionine is a prerequisite for activity but the enzyme has broad specificity at other positions. This chain is Peptide deformylase 2, found in Prochlorococcus marinus (strain MIT 9313).